Here is a 177-residue protein sequence, read N- to C-terminus: Peptide methionine sulfoxide reductase MsrA 2 (177 aa).

C12 is a catalytic residue.

Belongs to the MsrA Met sulfoxide reductase family.

It catalyses the reaction L-methionyl-[protein] + [thioredoxin]-disulfide + H2O = L-methionyl-(S)-S-oxide-[protein] + [thioredoxin]-dithiol. The catalysed reaction is [thioredoxin]-disulfide + L-methionine + H2O = L-methionine (S)-S-oxide + [thioredoxin]-dithiol. Has an important function as a repair enzyme for proteins that have been inactivated by oxidation. Catalyzes the reversible oxidation-reduction of methionine sulfoxide in proteins to methionine. This chain is Peptide methionine sulfoxide reductase MsrA 2, found in Staphylococcus aureus (strain MRSA252).